Reading from the N-terminus, the 438-residue chain is Transposon Ty2-F Gag polyprotein (438 aa).

3 stretches are compositionally biased toward polar residues: residues 1–11, 19–39, and 49–60; these read MESQQLHQNPH, ASVTSKEVPSNQDPLAVSASN, and KVNSQQETTPGT. Disordered stretches follow at residues 1–86, 366–397, and 419–438; these read MESQ…GQYQ, VSRTSPNTTNTKVTTRNYHRTNSSKPRAAKAH, and SSQYLSDDNELSLRPATERI. Residues 295 to 397 are RNA-binding; that stretch reads ENNINVSDRL…SSKPRAAKAH (103 aa). The span at 369–381 shows a compositional bias: low complexity; it reads TSPNTTNTKVTTR.

As to quaternary structure, homotrimer.

The protein resides in the cytoplasm. Capsid protein (CA) is the structural component of the virus-like particle (VLP), forming the shell that encapsulates the retrotransposons dimeric RNA genome. The particles are assembled from trimer-clustered units and there are holes in the capsid shells that allow for the diffusion of macromolecules. CA also has nucleocapsid-like chaperone activity, promoting primer tRNA(i)-Met annealing to the multipartite primer-binding site (PBS), dimerization of Ty2 RNA and initiation of reverse transcription. The protein is Transposon Ty2-F Gag polyprotein (TY2A-F) of Saccharomyces cerevisiae (strain ATCC 204508 / S288c) (Baker's yeast).